Reading from the N-terminus, the 224-residue chain is Beta-casein (224 aa).

Residues 1 to 15 (MKVLILACLVALALA) form the signal peptide. Ser-30, Ser-32, Ser-33, and Ser-34 each carry phosphoserine. The residue at position 50 (Ser-50) is a Phosphoserine; in variant A1, variant A2, variant A3, variant B, variant E, variant F, variant G and variant H.

Belongs to the beta-casein family. As to expression, mammary gland specific. Secreted in milk.

It localises to the secreted. Its function is as follows. Important role in determination of the surface properties of the casein micelles. Functionally, casoparan acts as a macrophage activator, increasing the phagocytic activity of macrophages and peroxide release from macrophages. It also acts as a bradykinin-potentiating peptide. Casohypotensin acts as a bradykinin-potentiating peptide. Induces hypotension in rats. Acts as a strong competitive inhibitor of endo-oligopeptidase A. In terms of biological role, antioxidant peptide has antioxidant activity. The sequence is that of Beta-casein (CSN2) from Bos taurus (Bovine).